A 349-amino-acid polypeptide reads, in one-letter code: N-formyl peptide receptor 3 (349 aa).

At 1-27 the chain is on the extracellular side; sequence METNFSIPLNESEEVLPEPAGHTVLWI. Asn4 and Asn10 each carry an N-linked (GlcNAc...) asparagine glycan. The chain crosses the membrane as a helical span at residues 28-50; that stretch reads FSLLVHGVTFIFGVLGNGLVIWV. At 51-61 the chain is on the cytoplasmic side; sequence AGFRMTRTVNT. Residues 62–83 form a helical membrane-spanning segment; that stretch reads ICYLNLALADFSFSAILPFRMV. The Extracellular segment spans residues 84–100; the sequence is SVAMREKWPFGTFLCKL. The cysteines at positions 98 and 176 are disulfide-linked. The helical transmembrane segment at 101–121 threads the bilayer; the sequence is VHVMIDINLFVSVYLITIIAL. Topologically, residues 122–140 are cytoplasmic; the sequence is DRCICVLHPAWAQNHRTMS. The helical transmembrane segment at 141–162 threads the bilayer; that stretch reads LAKRVMMGLWILAIVLTLPNFI. The Extracellular portion of the chain corresponds to 163–205; the sequence is FWTTISTKNGDTYCIFNFPFWGDTAVERLNAFITMGKVFLILH. The helical transmembrane segment at 206–226 threads the bilayer; the sequence is FIIGFSMPMSIITVCYGIIAA. At 227-242 the chain is on the cytoplasmic side; it reads KIHRNHMIKSSSPLRV. Residues 243–266 form a helical membrane-spanning segment; the sequence is FAAVVASFFICWFPYELIGILMAV. Over 267–286 the chain is Extracellular; sequence WLKEMLLNGKYKIILVLLNP. The chain crosses the membrane as a helical span at residues 287 to 306; the sequence is TSSLAFFNSCLNPILYVFLG. At 307–349 the chain is on the cytoplasmic side; sequence SNFQERLIRSLPTSLERALTEVPDSAQTSNTHTNSASPPEETE. The tract at residues 328 to 349 is disordered; it reads VPDSAQTSNTHTNSASPPEETE. The span at 331–343 shows a compositional bias: polar residues; sequence SAQTSNTHTNSAS.

This sequence belongs to the G-protein coupled receptor 1 family.

It localises to the cell membrane. In terms of biological role, low affinity receptor for N-formyl-methionyl peptides, which are powerful neutrophils chemotactic factors. Binding of FMLP to the receptor causes activation of neutrophils. This response is mediated via a G-protein that activates a phosphatidylinositol-calcium second messenger system. The protein is N-formyl peptide receptor 3 (FPR3) of Pongo pygmaeus (Bornean orangutan).